A 480-amino-acid polypeptide reads, in one-letter code: Methylenetetrahydrofolate--tRNA-(uracil-5-)-methyltransferase TrmFO (480 aa).

15–20 is a binding site for FAD; the sequence is GGGLAG.

Belongs to the MnmG family. TrmFO subfamily. FAD is required as a cofactor.

It is found in the cytoplasm. The catalysed reaction is uridine(54) in tRNA + (6R)-5,10-methylene-5,6,7,8-tetrahydrofolate + NADH + H(+) = 5-methyluridine(54) in tRNA + (6S)-5,6,7,8-tetrahydrofolate + NAD(+). It carries out the reaction uridine(54) in tRNA + (6R)-5,10-methylene-5,6,7,8-tetrahydrofolate + NADPH + H(+) = 5-methyluridine(54) in tRNA + (6S)-5,6,7,8-tetrahydrofolate + NADP(+). In terms of biological role, catalyzes the folate-dependent formation of 5-methyl-uridine at position 54 (M-5-U54) in all tRNAs. The protein is Methylenetetrahydrofolate--tRNA-(uracil-5-)-methyltransferase TrmFO of Caulobacter sp. (strain K31).